The chain runs to 1454 residues: Probable cleavage and polyadenylation specificity factor subunit 1 (1454 aa).

Residues 736-765 (KQSNTRKRKRLGHDAIQSSRGGEQSDAIDP) are disordered.

Belongs to the CPSF1 family. In terms of assembly, CPSF is a heterotetramer composed of four distinct subunits 160 (cpsf-1), 100 (cpsf-2), 70 (cpsf-3), and 30 kDa (cpsf-4).

It is found in the nucleus. In terms of biological role, CPSF plays a key role in pre-mRNA 3'-end formation, recognizing the AAUAAA signal sequence and interacting with poly(A)polymerase and other factors to bring about cleavage and poly(A) addition. This subunit is involved in the RNA recognition step of the polyadenylation reaction. In Caenorhabditis elegans, this protein is Probable cleavage and polyadenylation specificity factor subunit 1 (cpsf-1).